Consider the following 215-residue polypeptide: C-type lectin domain family 4 member D (215 aa).

Over 1–17 (MGLEKPQSKLEGGMHPQ) the chain is Cytoplasmic. The chain crosses the membrane as a helical; Signal-anchor for type II membrane protein span at residues 18 to 38 (LIPSVIAVVFILLLSVCFIAS). The Extracellular portion of the chain corresponds to 39-215 (CLVTHHNFSR…ICKIPGTTLN (177 aa)). The N-linked (GlcNAc...) asparagine glycan is linked to Asn-45. Cys-84 and Cys-95 are disulfide-bonded. The region spanning 91–208 (FQSNCYFPLT…CNFEASRICK (118 aa)) is the C-type lectin domain. N-linked (GlcNAc...) asparagine glycosylation is found at Asn-102 and Asn-111. 2 disulfides stabilise this stretch: Cys-112–Cys-207 and Cys-182–Cys-199. The Ca(2+) site is built by Glu-173, Asp-175, Asn-195, and Asp-196.

Heterodimer with CLEC4E; disulfide-linked. CLEC4E acts as a bridge for interaction between CLEC4D and FCER1G to form a functional complex. Heterodimer with CLEC6A; this heterodimer forms a pattern recognition receptor (PRR) against fungal infection. As to expression, expressed weakly in peripheral blood leukocytes, bone marrow and spleen. Expression is confined mostly in monocytes and macrophage and seems to be up-regulated by IL-6, IL-10, TNF-alpha and IFN-gamma.

The protein resides in the cell membrane. Calcium-dependent lectin that acts as a pattern recognition receptor (PRR) of the innate immune system: recognizes damage-associated molecular patterns (DAMPs) of pathogen-associated molecular patterns (PAMPs) of bacteria and fungi. The PAMPs include alpha-mannans on C.albicans hypheas and mycobacterial trehalose 6,6'-dimycolate (TDM). Interacts with signaling adapter Fc receptor gamma chain/FCER1G, likely via CLEC4E, to form a functional complex in myeloid cells. Binding of mycobacterial TDM or C.albicans alpha-mannans to this receptor complex leads to phosphorylation of the immunoreceptor tyrosine-based activation motif (ITAM) of FCER1G, triggering activation of SYK, CARD9 and NF-kappa-B, consequently driving maturation of antigen-presenting cells and shaping antigen-specific priming of T-cells toward effector T-helper 1 and T-helper 17 cell subtypes. The heterodimer formed with CLEC6A is active against fungal infection. Functions as an endocytic receptor. May be involved in antigen uptake at the site of infection, either for clearance of the antigen, or for processing and further presentation to T-cells. The chain is C-type lectin domain family 4 member D from Homo sapiens (Human).